The sequence spans 648 residues: Threonine--tRNA ligase (648 aa).

The TGS domain occupies 1–61 (MIKITLPDGS…TTDGNLILYT (61 aa)). The interval 240-539 (DHRKLGKELE…LLEHTAGNFP (300 aa)) is catalytic. C335, H386, and H516 together coordinate Zn(2+).

It belongs to the class-II aminoacyl-tRNA synthetase family. Homodimer. It depends on Zn(2+) as a cofactor.

Its subcellular location is the cytoplasm. It carries out the reaction tRNA(Thr) + L-threonine + ATP = L-threonyl-tRNA(Thr) + AMP + diphosphate + H(+). Its function is as follows. Catalyzes the attachment of threonine to tRNA(Thr) in a two-step reaction: L-threonine is first activated by ATP to form Thr-AMP and then transferred to the acceptor end of tRNA(Thr). Also edits incorrectly charged L-seryl-tRNA(Thr). This Flavobacterium johnsoniae (strain ATCC 17061 / DSM 2064 / JCM 8514 / BCRC 14874 / CCUG 350202 / NBRC 14942 / NCIMB 11054 / UW101) (Cytophaga johnsonae) protein is Threonine--tRNA ligase.